The following is a 360-amino-acid chain: Phenylalanine--tRNA ligase alpha subunit (360 aa).

Residue glutamate 264 coordinates Mg(2+).

It belongs to the class-II aminoacyl-tRNA synthetase family. Phe-tRNA synthetase alpha subunit type 1 subfamily. As to quaternary structure, tetramer of two alpha and two beta subunits. Mg(2+) is required as a cofactor.

The protein resides in the cytoplasm. The catalysed reaction is tRNA(Phe) + L-phenylalanine + ATP = L-phenylalanyl-tRNA(Phe) + AMP + diphosphate + H(+). This is Phenylalanine--tRNA ligase alpha subunit from Streptomyces avermitilis (strain ATCC 31267 / DSM 46492 / JCM 5070 / NBRC 14893 / NCIMB 12804 / NRRL 8165 / MA-4680).